The sequence spans 316 residues: Probable cell division protein WhiA (316 aa).

A DNA-binding region (H-T-H motif) is located at residues 276–309; that stretch reads SLEELGKIAEPQITKDAIAGRIRRLLQLAEKTEK.

The protein belongs to the WhiA family.

Functionally, involved in cell division and chromosome segregation. This Bifidobacterium longum (strain NCC 2705) protein is Probable cell division protein WhiA.